The sequence spans 382 residues: ATP phosphoribosyltransferase regulatory subunit (382 aa).

This sequence belongs to the class-II aminoacyl-tRNA synthetase family. HisZ subfamily. As to quaternary structure, heteromultimer composed of HisG and HisZ subunits.

It localises to the cytoplasm. Its pathway is amino-acid biosynthesis; L-histidine biosynthesis; L-histidine from 5-phospho-alpha-D-ribose 1-diphosphate: step 1/9. Required for the first step of histidine biosynthesis. May allow the feedback regulation of ATP phosphoribosyltransferase activity by histidine. The polypeptide is ATP phosphoribosyltransferase regulatory subunit (Burkholderia multivorans (strain ATCC 17616 / 249)).